Consider the following 313-residue polypeptide: WD repeat-containing protein 82-B (313 aa).

6 WD repeats span residues 19 to 58 (ENSDKINCFDFSPTGETVISSSDDDSIVLYDCQEGKPKRT), 105 to 144 (GHSKRVVSLSMSPVDDTFISGSLDKTIRLWDLRSPNCQGL), 146 to 184 (HLQGKPVCSFDPEGLIFAAGINSEMVKLYDLRSFDKGPF), 192 to 231 (DRTCEWTALKFSNDGKLILLSTNGGFLRLVDAFKGAVMHT), 236 to 276 (NNSK…KVAV), and 280 to 313 (KHTGPITCLQFNPKFMTFASACSNMAFWLPTIDD).

It belongs to the WD repeat SWD2 family. Component of the SET1/COMPASS complex. Component of the PNUTS-PP1 phosphatase complex.

It localises to the nucleus. The protein resides in the chromosome. It is found in the cytoplasm. Its function is as follows. Regulatory component of the SET1/COMPASS complex implicated in the tethering of this complex to transcriptional start sites of active genes. Facilitates histone H3 'Lys-4' methylation (H3K4me) via recruitment of the SETD1A or SETD1B to the 'Ser-5' phosphorylated C-terminal domain (CTD) of RNA polymerase II large subunit (POLR2A). Component of the PNUTS-PP1 protein phosphatase complex, a protein phosphatase 1 (PP1) complex that promotes RNA polymerase II transcription pause-release, allowing transcription elongation. This is WD repeat-containing protein 82-B (wdr82-b) from Xenopus laevis (African clawed frog).